Here is a 227-residue protein sequence, read N- to C-terminus: Transmembrane emp24 domain-containing protein 4 (227 aa).

Residues 1-29 form the signal peptide; the sequence is MAGVGVGPLQGMVRFGLLVLTVCAACARG. Residues 30–194 lie on the Lumenal side of the membrane; sequence LYFHIGETEK…RLTSESTNQR (165 aa). The GOLD domain occupies 39 to 137; that stretch reads KRCFIEEIPD…KLRVHLDIQV (99 aa). Residue asparagine 117 is glycosylated (N-linked (GlcNAc...) asparagine). The stretch at 147–176 forms a coiled coil; sequence IAAKDKLTELQLRARQLLDQVEQIQKEQDY. The chain crosses the membrane as a helical span at residues 195 to 212; sequence VLWWSIAQTVILILTGIW. Over 213–227 the chain is Cytoplasmic; it reads QMRHLKSFFEAKKLV. The short motif at 220–221 is the COPII vesicle coat-binding element; that stretch reads FF. A COPI vesicle coat-binding motif is present at residues 220–227; it reads FFEAKKLV.

Belongs to the EMP24/GP25L family.

It is found in the endoplasmic reticulum membrane. In terms of biological role, involved in vesicular protein trafficking, mainly in the early secretory pathway. Involved in the maintenance of the Golgi apparatus. Appears to play a role in the biosynthesis of secreted cargo including processing. Involved in endoplasmic reticulum stress response. May play a role in the regulation of heat-shock response and apoptosis. This Mus musculus (Mouse) protein is Transmembrane emp24 domain-containing protein 4 (Tmed4).